A 388-amino-acid chain; its full sequence is Succinate--CoA ligase [ADP-forming] subunit beta (388 aa).

An ATP-grasp domain is found at 9–245 (KELLASYGLP…KSQENERELK (237 aa)). Residues Lys46, 53–55 (GRG), Glu100, Tyr103, and Glu108 each bind ATP. Mg(2+)-binding residues include Asn200 and Asp214. Residues Asn265 and 322–324 (GIV) each bind substrate.

It belongs to the succinate/malate CoA ligase beta subunit family. As to quaternary structure, heterotetramer of two alpha and two beta subunits. It depends on Mg(2+) as a cofactor.

The enzyme catalyses succinate + ATP + CoA = succinyl-CoA + ADP + phosphate. It carries out the reaction GTP + succinate + CoA = succinyl-CoA + GDP + phosphate. It participates in carbohydrate metabolism; tricarboxylic acid cycle; succinate from succinyl-CoA (ligase route): step 1/1. Its function is as follows. Succinyl-CoA synthetase functions in the citric acid cycle (TCA), coupling the hydrolysis of succinyl-CoA to the synthesis of either ATP or GTP and thus represents the only step of substrate-level phosphorylation in the TCA. The beta subunit provides nucleotide specificity of the enzyme and binds the substrate succinate, while the binding sites for coenzyme A and phosphate are found in the alpha subunit. The polypeptide is Succinate--CoA ligase [ADP-forming] subunit beta (Neisseria meningitidis serogroup A / serotype 4A (strain DSM 15465 / Z2491)).